The sequence spans 465 residues: Trigger factor (465 aa).

The 86-residue stretch at 163 to 248 folds into the PPIase FKBP-type domain; it reads GDVINFNFKG…INKIKENQPA (86 aa). A disordered region spans residues 431 to 465; the sequence is EIVNKNQNDNEIEQDKEQKDNNEEKIKQENNLENK. The segment covering 443-465 has biased composition (basic and acidic residues); that stretch reads EQDKEQKDNNEEKIKQENNLENK.

Belongs to the FKBP-type PPIase family. Tig subfamily.

Its subcellular location is the cytoplasm. The catalysed reaction is [protein]-peptidylproline (omega=180) = [protein]-peptidylproline (omega=0). Its function is as follows. Involved in protein export. Acts as a chaperone by maintaining the newly synthesized protein in an open conformation. Functions as a peptidyl-prolyl cis-trans isomerase. The protein is Trigger factor of Mesomycoplasma hyopneumoniae (strain J / ATCC 25934 / NCTC 10110) (Mycoplasma hyopneumoniae).